The primary structure comprises 106 residues: ATP-dependent Clp protease adapter protein ClpS (106 aa).

A compositionally biased stretch (basic and acidic residues) spans 1–13 (MPRNTSHEHDHGL). Residues 1-20 (MPRNTSHEHDHGLMVEASKP) are disordered.

The protein belongs to the ClpS family. In terms of assembly, binds to the N-terminal domain of the chaperone ClpA.

Its function is as follows. Involved in the modulation of the specificity of the ClpAP-mediated ATP-dependent protein degradation. The polypeptide is ATP-dependent Clp protease adapter protein ClpS (Xanthomonas axonopodis pv. citri (strain 306)).